The chain runs to 344 residues: Adenosine deaminase (344 aa).

The Zn(2+) site is built by His14 and His16. The substrate site is built by His16, Asp18, and Gly177. Zn(2+) is bound at residue His204. Glu207 serves as the catalytic Proton donor. Asp284 lines the Zn(2+) pocket.

Belongs to the metallo-dependent hydrolases superfamily. Adenosine and AMP deaminases family. Adenosine deaminase subfamily. Zn(2+) serves as cofactor.

It carries out the reaction adenosine + H2O + H(+) = inosine + NH4(+). The enzyme catalyses 2'-deoxyadenosine + H2O + H(+) = 2'-deoxyinosine + NH4(+). Catalyzes the hydrolytic deamination of adenosine and 2-deoxyadenosine. In Haemophilus ducreyi (strain 35000HP / ATCC 700724), this protein is Adenosine deaminase.